Here is an 89-residue protein sequence, read N- to C-terminus: MSITPERKQEMIKDYATKEGDTGSPEVQVAILTERITNLTEHFKIHKKDNHSRRGLLMMVSQRRRLLDYLKGKNVKRYEDLIGRLGIRK.

A compositionally biased stretch (basic and acidic residues) spans 1 to 21; sequence MSITPERKQEMIKDYATKEGD. The interval 1–23 is disordered; it reads MSITPERKQEMIKDYATKEGDTG.

This sequence belongs to the universal ribosomal protein uS15 family. In terms of assembly, part of the 30S ribosomal subunit. Forms a bridge to the 50S subunit in the 70S ribosome, contacting the 23S rRNA.

Its function is as follows. One of the primary rRNA binding proteins, it binds directly to 16S rRNA where it helps nucleate assembly of the platform of the 30S subunit by binding and bridging several RNA helices of the 16S rRNA. In terms of biological role, forms an intersubunit bridge (bridge B4) with the 23S rRNA of the 50S subunit in the ribosome. The polypeptide is Small ribosomal subunit protein uS15 (Rhodospirillum rubrum (strain ATCC 11170 / ATH 1.1.1 / DSM 467 / LMG 4362 / NCIMB 8255 / S1)).